Here is a 127-residue protein sequence, read N- to C-terminus: Small ribosomal subunit protein uS11 (127 aa).

This sequence belongs to the universal ribosomal protein uS11 family. In terms of assembly, part of the 30S ribosomal subunit. Interacts with proteins S7 and S18. Binds to IF-3.

Functionally, located on the platform of the 30S subunit, it bridges several disparate RNA helices of the 16S rRNA. Forms part of the Shine-Dalgarno cleft in the 70S ribosome. The protein is Small ribosomal subunit protein uS11 of Streptococcus agalactiae serotype Ia (strain ATCC 27591 / A909 / CDC SS700).